A 129-amino-acid polypeptide reads, in one-letter code: Fluoride-specific ion channel FluC (129 aa).

4 helical membrane-spanning segments follow: residues 8 to 28 (ILLVGVGGFLGSVARYLVALW), 34 to 54 (AVFPFATLTVNLLGSFLIGFI), 70 to 90 (IFLVTGFCGGFTTFSSYMIEH), and 102 to 122 (AALYLFGSLIGGFIALYLGII). Na(+) is bound by residues Gly-78 and Thr-81.

This sequence belongs to the fluoride channel Fluc/FEX (TC 1.A.43) family.

The protein resides in the cell inner membrane. The catalysed reaction is fluoride(in) = fluoride(out). Na(+) is not transported, but it plays an essential structural role and its presence is essential for fluoride channel function. Functionally, fluoride-specific ion channel. Important for reducing fluoride concentration in the cell, thus reducing its toxicity. This is Fluoride-specific ion channel FluC from Chlorobium chlorochromatii (strain CaD3).